The sequence spans 452 residues: Maltoporin (452 aa).

Positions 1–25 (MMITLRKLPLAVAVAAGVMSAQAMA) are cleaved as a signal peptide.

The protein belongs to the porin LamB (TC 1.B.3) family. In terms of assembly, homotrimer formed of three 18-stranded antiparallel beta-barrels, containing three independent channels.

It is found in the cell outer membrane. The enzyme catalyses beta-maltose(in) = beta-maltose(out). In terms of biological role, involved in the transport of maltose and maltodextrins. The sequence is that of Maltoporin from Salmonella paratyphi A (strain ATCC 9150 / SARB42).